The chain runs to 388 residues: Succinate--CoA ligase [ADP-forming] subunit beta (388 aa).

In terms of domain architecture, ATP-grasp spans 9–244 (KQLFAEFGLP…PSQEDEREAH (236 aa)). Residues K46, 53-55 (GRG), E99, S102, and E107 each bind ATP. Positions 199 and 213 each coordinate Mg(2+). Substrate-binding positions include N264 and 321 to 323 (GIV).

Belongs to the succinate/malate CoA ligase beta subunit family. Heterotetramer of two alpha and two beta subunits. Requires Mg(2+) as cofactor.

The enzyme catalyses succinate + ATP + CoA = succinyl-CoA + ADP + phosphate. It catalyses the reaction GTP + succinate + CoA = succinyl-CoA + GDP + phosphate. Its pathway is carbohydrate metabolism; tricarboxylic acid cycle; succinate from succinyl-CoA (ligase route): step 1/1. Its function is as follows. Succinyl-CoA synthetase functions in the citric acid cycle (TCA), coupling the hydrolysis of succinyl-CoA to the synthesis of either ATP or GTP and thus represents the only step of substrate-level phosphorylation in the TCA. The beta subunit provides nucleotide specificity of the enzyme and binds the substrate succinate, while the binding sites for coenzyme A and phosphate are found in the alpha subunit. The polypeptide is Succinate--CoA ligase [ADP-forming] subunit beta (Vibrio parahaemolyticus serotype O3:K6 (strain RIMD 2210633)).